Consider the following 133-residue polypeptide: Holo-[acyl-carrier-protein] synthase (133 aa).

The Mg(2+) site is built by Asp8 and Glu57.

The protein belongs to the P-Pant transferase superfamily. AcpS family. Requires Mg(2+) as cofactor.

The protein localises to the cytoplasm. The catalysed reaction is apo-[ACP] + CoA = holo-[ACP] + adenosine 3',5'-bisphosphate + H(+). Functionally, transfers the 4'-phosphopantetheine moiety from coenzyme A to a Ser of acyl-carrier-protein. The chain is Holo-[acyl-carrier-protein] synthase from Caulobacter vibrioides (strain ATCC 19089 / CIP 103742 / CB 15) (Caulobacter crescentus).